A 362-amino-acid chain; its full sequence is MATKKLLWVVLSFSLVLGVANSFDFHDKDLASEESLWDLYERWRSHHTVSRSLGEKHKRFNVFKANLMHVHNTNKMDKPYKLKLNKFADMTNHEFRSTYAGSKVNHPRMFRGTPHENGAFMYEKVVSVPPSVDWRKKGAVTDVKDQGQCGSCWAFSTVVAVEGINQIKTNKLVALSEQELVDCDKEENQGCNGGLMESAFEFIKQKGGITTESNYPYKAQEGTCDASKVNDLAVSIDGHENVPANDEDALLKAVANQPVSVAIDAGGSDFQFYSEGVFTGDCSTDLNHGVAIVGYGTTVDGTNYWIVRNSWGPEWGEHGYIRMQRNISKKEGLCGIAMLPSYPIKNSSDNPTGSFSSPKDEL.

The N-terminal stretch at 1–20 (MATKKLLWVVLSFSLVLGVA) is a signal peptide. Positions 21–131 (NSFDFHDKDL…YEKVVSVPPS (111 aa)) are cleaved as a propeptide — activation peptide. Cystine bridges form between Cys149/Cys191, Cys183/Cys224, and Cys282/Cys334. Cys152 is a catalytic residue. Active-site residues include His288 and Asn309. Residues Asn326 and Asn346 are each glycosylated (N-linked (GlcNAc...) asparagine). The Prevents secretion from ER signature appears at 359 to 362 (KDEL).

This sequence belongs to the peptidase C1 family. Monomer.

It is found in the endoplasmic reticulum lumen. In terms of biological role, thought to be involved in the hydrolysis of stored seed proteins. The chain is Vignain from Phaseolus vulgaris (Kidney bean).